Here is a 306-residue protein sequence, read N- to C-terminus: Putative F-box protein At1g47300 (306 aa).

Positions Met-1 to Leu-45 constitute an F-box domain. The interval Asp-235 to Lys-278 is disordered. Residues Lys-242–Glu-270 are compositionally biased toward acidic residues.

The protein is Putative F-box protein At1g47300 of Arabidopsis thaliana (Mouse-ear cress).